Here is a 459-residue protein sequence, read N- to C-terminus: Phosphoglucosamine mutase (459 aa).

The active-site Phosphoserine intermediate is serine 105. Residues serine 105, aspartate 252, aspartate 254, and aspartate 256 each coordinate Mg(2+). Position 105 is a phosphoserine (serine 105).

The protein belongs to the phosphohexose mutase family. Mg(2+) serves as cofactor. In terms of processing, activated by phosphorylation.

The enzyme catalyses alpha-D-glucosamine 1-phosphate = D-glucosamine 6-phosphate. In terms of biological role, catalyzes the conversion of glucosamine-6-phosphate to glucosamine-1-phosphate. The polypeptide is Phosphoglucosamine mutase (Bifidobacterium adolescentis (strain ATCC 15703 / DSM 20083 / NCTC 11814 / E194a)).